A 209-amino-acid polypeptide reads, in one-letter code: Large ribosomal subunit protein uL3 (209 aa).

The interval 133-153 is disordered; that stretch reads THGNSLSHRVPGSIGQNQTPG. Position 150 is an N5-methylglutamine (Gln-150).

It belongs to the universal ribosomal protein uL3 family. In terms of assembly, part of the 50S ribosomal subunit. Forms a cluster with proteins L14 and L19. Post-translationally, methylated by PrmB.

One of the primary rRNA binding proteins, it binds directly near the 3'-end of the 23S rRNA, where it nucleates assembly of the 50S subunit. The sequence is that of Large ribosomal subunit protein uL3 from Serratia proteamaculans (strain 568).